A 177-amino-acid chain; its full sequence is Large ribosomal subunit protein uL6 (177 aa).

Residues 157-171 show a composition bias toward basic and acidic residues; that stretch reads YKGKGVRYSDENVRR. The segment at 157–177 is disordered; that stretch reads YKGKGVRYSDENVRRKEAKKK.

It belongs to the universal ribosomal protein uL6 family. As to quaternary structure, part of the 50S ribosomal subunit.

This protein binds to the 23S rRNA, and is important in its secondary structure. It is located near the subunit interface in the base of the L7/L12 stalk, and near the tRNA binding site of the peptidyltransferase center. This chain is Large ribosomal subunit protein uL6, found in Pseudoalteromonas translucida (strain TAC 125).